We begin with the raw amino-acid sequence, 106 residues long: Large ribosomal subunit protein eL30 (106 aa).

The protein belongs to the eukaryotic ribosomal protein eL30 family. Component of the large ribosomal subunit. Mature ribosomes consist of a small (40S) and a large (60S) subunit. The 40S subunit contains about 32 different proteins and 1 molecule of RNA (18S). The 60S subunit contains 45 different proteins and 3 molecules of RNA (25S, 5.8S and 5S).

The protein localises to the cytoplasm. Functionally, component of the ribosome, a large ribonucleoprotein complex responsible for the synthesis of proteins in the cell. The small ribosomal subunit (SSU) binds messenger RNAs (mRNAs) and translates the encoded message by selecting cognate aminoacyl-transfer RNA (tRNA) molecules. The large subunit (LSU) contains the ribosomal catalytic site termed the peptidyl transferase center (PTC), which catalyzes the formation of peptide bonds, thereby polymerizing the amino acids delivered by tRNAs into a polypeptide chain. The nascent polypeptides leave the ribosome through a tunnel in the LSU and interact with protein factors that function in enzymatic processing, targeting, and the membrane insertion of nascent chains at the exit of the ribosomal tunnel. The polypeptide is Large ribosomal subunit protein eL30 (Candida albicans (strain SC5314 / ATCC MYA-2876) (Yeast)).